A 352-amino-acid chain; its full sequence is C-C chemokine receptor type 5 (352 aa).

The Extracellular segment spans residues Met-1 to Ala-30. Tyr-3 is subject to Sulfotyrosine. Residues Ser-6 and Ser-7 are each glycosylated (O-linked (GalNAc...) serine). A sulfotyrosine mark is found at Tyr-10, Tyr-14, and Tyr-15. 2 disulfides stabilise this stretch: Cys-20/Cys-269 and Cys-101/Cys-178. The chain crosses the membrane as a helical span at residues Arg-31–Cys-58. The Cytoplasmic segment spans residues Lys-59–Tyr-68. A helical membrane pass occupies residues Leu-69 to Tyr-89. Residues Ala-90–Gln-102 lie on the Extracellular side of the membrane. The helical transmembrane segment at Leu-103–Ile-124 threads the bilayer. Residues Asp-125–Thr-141 lie on the Cytoplasmic side of the membrane. A helical transmembrane segment spans residues Val-142–Phe-166. The Extracellular portion of the chain corresponds to Thr-167 to Ile-198. A helical membrane pass occupies residues Val-199–Leu-218. Residues Lys-219–Arg-235 lie on the Cytoplasmic side of the membrane. A helical membrane pass occupies residues Leu-236 to Phe-260. The Extracellular segment spans residues Gln-261–Gln-277. Residues Ala-278–Gly-301 form a helical membrane-spanning segment. Over Glu-302 to Leu-352 the chain is Cytoplasmic. 3 S-palmitoyl cysteine lipidation sites follow: Cys-321, Cys-323, and Cys-324. A phosphoserine; by BARK1 mark is found at Ser-336, Ser-337, Ser-342, and Ser-349.

This sequence belongs to the G-protein coupled receptor 1 family. In terms of assembly, interacts with PRAF2. Efficient ligand binding to CCL3/MIP-1alpha and CCL4/MIP-1beta requires sulfation, O-glycosylation and sialic acid modifications. Glycosylation on Ser-6 is required for efficient binding of CCL4. Interacts with GRK2. Interacts with ARRB1 and ARRB2. Interacts with CNIH4. Interacts with S100A4; this interaction stimulates T-lymphocyte chemotaxis. In terms of processing, sulfated on at least 2 of the N-terminal tyrosines. Sulfation is required for efficient binding of the chemokines, CCL3 and CCL4. Post-translationally, palmitoylation in the C-terminal is important for cell surface expression. Phosphorylation on serine residues in the C-terminal is stimulated by binding CC chemokines especially by APO-RANTES. In terms of processing, O-glycosylated, but not N-glycosylated. Ser-6 appears to be the major site even if Ser-7 may be also O-glycosylated. Also sialylated glycans present which contribute to chemokine binding. Thr-16 and Ser-17 may also be glycosylated and, if so, with small moieties such as a T-antigen.

The protein resides in the cell membrane. Receptor for a number of inflammatory CC-chemokines including CCL3/MIP-1-alpha, CCL4/MIP-1-beta and RANTES and subsequently transduces a signal by increasing the intracellular calcium ion level. May play a role in the control of granulocytic lineage proliferation or differentiation. Participates in T-lymphocyte migration to the infection site by acting as a chemotactic receptor. In Chlorocebus pygerythrus (Vervet monkey), this protein is C-C chemokine receptor type 5 (CCR5).